The chain runs to 214 residues: MTVKTQLNYQVYNWEGQVSGNADLNLKISKDSGMYLVHRALVKQSNEKRQGSANTKTRSEVRGGGRKPWRQKGTGRARAGSIRSPLWRGGGVIFGPKPRSFAKKMNKKESQLALRTALNNKSVNTLVVENFDTYFQKPKTKLFIEAITRWNLDLNKKLLVIVDKKDLNVYLSIRNLYNVEIISADTLNIMALLAAHKVIITVDALSKIQEVYNG.

The disordered stretch occupies residues 43-80 (KQSNEKRQGSANTKTRSEVRGGGRKPWRQKGTGRARAG). Over residues 64–75 (GGRKPWRQKGTG) the composition is skewed to basic residues.

The protein belongs to the universal ribosomal protein uL4 family. Part of the 50S ribosomal subunit.

It is found in the plastid. It localises to the chloroplast. Its function is as follows. Probably binds the 23S rRNA. The protein is Large ribosomal subunit protein uL4c (rpl4) of Porphyra purpurea (Red seaweed).